A 209-amino-acid chain; its full sequence is Large ribosomal subunit protein bL25 (209 aa).

The segment at 185 to 209 is disordered; the sequence is SKATTGEEEGAEAAGEGEEAEEKPE. The segment covering 190-209 has biased composition (acidic residues); sequence GEEEGAEAAGEGEEAEEKPE.

The protein belongs to the bacterial ribosomal protein bL25 family. CTC subfamily. Part of the 50S ribosomal subunit; part of the 5S rRNA/L5/L18/L25 subcomplex. Contacts the 5S rRNA. Binds to the 5S rRNA independently of L5 and L18.

This is one of the proteins that binds to the 5S RNA in the ribosome where it forms part of the central protuberance. In Syntrophomonas wolfei subsp. wolfei (strain DSM 2245B / Goettingen), this protein is Large ribosomal subunit protein bL25.